A 146-amino-acid polypeptide reads, in one-letter code: Small ribosomal subunit protein uS5 (146 aa).

The S5 DRBM domain occupies 8 to 71; that stretch reads FEEVIVNIGR…DDAFKNIIDV (64 aa).

This sequence belongs to the universal ribosomal protein uS5 family. In terms of assembly, part of the 30S ribosomal subunit. Contacts proteins S4 and S8.

Functionally, with S4 and S12 plays an important role in translational accuracy. Located at the back of the 30S subunit body where it stabilizes the conformation of the head with respect to the body. The chain is Small ribosomal subunit protein uS5 from Campylobacter hominis (strain ATCC BAA-381 / DSM 21671 / CCUG 45161 / LMG 19568 / NCTC 13146 / CH001A).